The sequence spans 962 residues: SH3 domain-binding protein 4 (962 aa).

Residues 55–114 (GNAKEVIAIKDYCPNNFTTLKFSKGDHLYVLDTSGGEWWYAHNTTEMGYIPSSYVQPLNY) form the SH3 1 domain. S131, S245, S250, S278, and S295 each carry phosphoserine. Residues 316 to 453 (TNIVCKLDSS…LEPCMYLAIV (138 aa)) enclose the ZU5 domain. Phosphoserine is present on S636. One can recognise an SH3 2 domain in the interval 653–723 (SSLKFGKLLK…HTKNVLVVGK (71 aa)).

In terms of assembly, homodimer or homooligomer. Interacts with DNM2, EPS15, clathrin, the adapter protein complex 2/AP-2 and TFRC. Interacts with the Rag GTPases RRAGA, RRAGB, RRAGC and RRAGD; the interaction is most probably direct, preferentially occurs with their inactive GDP-bound form and is negatively regulated by amino acids. Post-translationally, phosphorylated upon EGF stimulation. Phosphorylation prevents interaction with DNM2.

Its subcellular location is the membrane. The protein localises to the clathrin-coated pit. The protein resides in the cytoplasmic vesicle. It localises to the clathrin-coated vesicle. It is found in the nucleus. May function in transferrin receptor internalization at the plasma membrane through a cargo-specific control of clathrin-mediated endocytosis. Alternatively, may act as a negative regulator of the amino acid-induced TOR signaling by inhibiting the formation of active Rag GTPase complexes. Preferentially binds inactive Rag GTPase complexes and prevents their interaction with the mTORC1 complex inhibiting its relocalization to lysosomes and its activation. Thereby, may indirectly regulate cell growth, proliferation and autophagy. The chain is SH3 domain-binding protein 4 (Sh3bp4) from Mus musculus (Mouse).